The sequence spans 289 residues: Bis(5'-nucleosyl)-tetraphosphatase, symmetrical (289 aa).

This sequence belongs to the Ap4A hydrolase family.

The enzyme catalyses P(1),P(4)-bis(5'-adenosyl) tetraphosphate + H2O = 2 ADP + 2 H(+). Hydrolyzes diadenosine 5',5'''-P1,P4-tetraphosphate to yield ADP. This chain is Bis(5'-nucleosyl)-tetraphosphatase, symmetrical, found in Pseudomonas fluorescens (strain ATCC BAA-477 / NRRL B-23932 / Pf-5).